The primary structure comprises 700 residues: Elongation factor G 1 (700 aa).

Residues 8–290 (ERYRNIGISA…AVIEYLPSPI (283 aa)) form the tr-type G domain. GTP is bound by residues 17–24 (AHIDAGKT), 88–92 (DTPGH), and 142–145 (NKMD).

Belongs to the TRAFAC class translation factor GTPase superfamily. Classic translation factor GTPase family. EF-G/EF-2 subfamily.

The protein resides in the cytoplasm. Functionally, catalyzes the GTP-dependent ribosomal translocation step during translation elongation. During this step, the ribosome changes from the pre-translocational (PRE) to the post-translocational (POST) state as the newly formed A-site-bound peptidyl-tRNA and P-site-bound deacylated tRNA move to the P and E sites, respectively. Catalyzes the coordinated movement of the two tRNA molecules, the mRNA and conformational changes in the ribosome. This chain is Elongation factor G 1, found in Bordetella avium (strain 197N).